We begin with the raw amino-acid sequence, 638 residues long: ATP-dependent rRNA helicase spb4 (638 aa).

Positions 14–42 (WDGVSPSLSEWVLEAVSSMGFTRMTPVQA) match the Q motif motif. The Helicase ATP-binding domain maps to 45-249 (IPLFMAHKDV…RVGLRNPVKV (205 aa)). Residue 58-65 (AVTGSGKT) participates in ATP binding. The short motif at 197-200 (DEAD) is the DEAD box element. One can recognise a Helicase C-terminal domain in the interval 283-437 (ALKHILHSVD…PISFSESEAT (155 aa)). Composition is skewed to basic and acidic residues over residues 534–554 (LLQESKEGDGTQESSNKRKAT) and 577–615 (QRRQEKNKWEKMTEEERQKIRETEQMVESIRVKNEEERR). The segment at 534–638 (LLQESKEGDG…KDEEEFEGFD (105 aa)) is disordered. Residues 566 to 619 (RNKKQKRREQKQRRQEKNKWEKMTEEERQKIRETEQMVESIRVKNEEERRLRRA) adopt a coiled-coil conformation.

The protein belongs to the DEAD box helicase family. DDX55/SPB4 subfamily. As to quaternary structure, component of pre-60S ribosomal complexes.

The protein localises to the nucleus. It localises to the nucleolus. The catalysed reaction is ATP + H2O = ADP + phosphate + H(+). In terms of biological role, ATP-binding RNA helicase involved in the biogenesis of 60S ribosomal subunits. Binds 90S pre-ribosomal particles and dissociates from pre-60S ribosomal particles after processing of 27SB pre-rRNA. Required for the normal formation of 18S rRNA through the processing of pre-rRNAs at sites A0, A1 and A2, and the normal formation of 25S and 5.8S rRNAs through the processing of pre-rRNAs at sites C1 and C2. The chain is ATP-dependent rRNA helicase spb4 from Aspergillus oryzae (strain ATCC 42149 / RIB 40) (Yellow koji mold).